The primary structure comprises 90 residues: Acylphosphatase (90 aa).

One can recognise an Acylphosphatase-like domain in the interval 5-90 (CLKAWVTGRV…DPPPGTFELG (86 aa)). Active-site residues include Arg-20 and Asn-38.

Belongs to the acylphosphatase family.

The catalysed reaction is an acyl phosphate + H2O = a carboxylate + phosphate + H(+). The polypeptide is Acylphosphatase (acyP) (Chromohalobacter salexigens (strain ATCC BAA-138 / DSM 3043 / CIP 106854 / NCIMB 13768 / 1H11)).